We begin with the raw amino-acid sequence, 369 residues long: Developmentally-regulated G-protein 3 (369 aa).

Residues 66-291 enclose the OBG-type G domain; that stretch reads SRVGLVGFPS…LLDKIWEYLD (226 aa). GTP contacts are provided by residues 72–79, 118–122, and 249–252; these read GFPSVGKS, DLPGI, and NKID. One can recognise a TGS domain in the interval 291-367; that stretch reads DLTRIYTKPK…EDEDVVQIVK (77 aa).

The protein belongs to the TRAFAC class OBG-HflX-like GTPase superfamily. OBG GTPase family.

Its function is as follows. Binds GDP and GTP, and has low GTPase activity in vitro. In Arabidopsis thaliana (Mouse-ear cress), this protein is Developmentally-regulated G-protein 3 (DRG3).